The sequence spans 390 residues: Bifunctional enzyme IspD/IspF (390 aa).

The 2-C-methyl-D-erythritol 4-phosphate cytidylyltransferase stretch occupies residues 1–229 (MAAGRGERAG…RQDHAVFPDI (229 aa)). The tract at residues 230–390 (RTGNGYDVHS…TVIYPGEVPE (161 aa)) is 2-C-methyl-D-erythritol 2,4-cyclodiphosphate synthase. A divalent metal cation-binding residues include D236 and H238. 4-CDP-2-C-methyl-D-erythritol 2-phosphate-binding positions include 236 to 238 (DVH) and 262 to 263 (HS). H270 contributes to the a divalent metal cation binding site. Residues 284–286 (DIG), 360–363 (TTNE), F367, and R370 each bind 4-CDP-2-C-methyl-D-erythritol 2-phosphate.

In the N-terminal section; belongs to the IspD/TarI cytidylyltransferase family. IspD subfamily. It in the C-terminal section; belongs to the IspF family. The cofactor is a divalent metal cation.

It carries out the reaction 2-C-methyl-D-erythritol 4-phosphate + CTP + H(+) = 4-CDP-2-C-methyl-D-erythritol + diphosphate. It catalyses the reaction 4-CDP-2-C-methyl-D-erythritol 2-phosphate = 2-C-methyl-D-erythritol 2,4-cyclic diphosphate + CMP. It functions in the pathway isoprenoid biosynthesis; isopentenyl diphosphate biosynthesis via DXP pathway; isopentenyl diphosphate from 1-deoxy-D-xylulose 5-phosphate: step 2/6. Its pathway is isoprenoid biosynthesis; isopentenyl diphosphate biosynthesis via DXP pathway; isopentenyl diphosphate from 1-deoxy-D-xylulose 5-phosphate: step 4/6. Functionally, bifunctional enzyme that catalyzes the formation of 4-diphosphocytidyl-2-C-methyl-D-erythritol from CTP and 2-C-methyl-D-erythritol 4-phosphate (MEP) (IspD), and catalyzes the conversion of 4-diphosphocytidyl-2-C-methyl-D-erythritol 2-phosphate (CDP-ME2P) to 2-C-methyl-D-erythritol 2,4-cyclodiphosphate (ME-CPP) with a corresponding release of cytidine 5-monophosphate (CMP) (IspF). This chain is Bifunctional enzyme IspD/IspF, found in Brucella suis biovar 1 (strain 1330).